A 431-amino-acid polypeptide reads, in one-letter code: MISANDKSTDTNVDSTQAEQKIAEKQNKLLSGIIERATKSSLGRKKLNPSVVESAVAKKMEEIHKNPTKLRLVVLGGGSFGTAMANLAARNGCDTTLWVRNKRTVKAMAKSQMNKKYLPGYKLDDRLKYSHELQAAVKDTDIIFIAVPGLAFRETLKSIAPFISGQSIVSLTKGMEKDTFSLMSDIIKDELPEVNFGVMSGPNLAIEIMKNMPSATVIASESEPLRHAVQAALHSAFFRVFASDDIRGVELGGALKNIYAIAMGMAAAYEVGENTKAMILTRGLAEMSRFGVHAGANPLTFLGLSGVGDLYATCSSELSRNYRIGNMLGRGMTIDAAVKKLGQTAEGVNTIQQVHEKATKEGIYMPITHALYAVIYEDKAALGVALHLMEAGFRSDVEFVMEHDHSNASLTAQMQTANSQSKEDKSKQGNK.

Positions 79, 80, 100, and 173 each coordinate NADPH. Residues lysine 173 and glycine 201 each contribute to the sn-glycerol 3-phosphate site. NADPH is bound at residue alanine 205. Positions 256, 309, 319, 320, and 321 each coordinate sn-glycerol 3-phosphate. Lysine 256 (proton acceptor) is an active-site residue. Arginine 320 serves as a coordination point for NADPH. Position 346 (glutamate 346) interacts with NADPH.

The protein belongs to the NAD-dependent glycerol-3-phosphate dehydrogenase family.

The protein localises to the cytoplasm. The enzyme catalyses sn-glycerol 3-phosphate + NAD(+) = dihydroxyacetone phosphate + NADH + H(+). The catalysed reaction is sn-glycerol 3-phosphate + NADP(+) = dihydroxyacetone phosphate + NADPH + H(+). The protein operates within membrane lipid metabolism; glycerophospholipid metabolism. Its function is as follows. Catalyzes the reduction of the glycolytic intermediate dihydroxyacetone phosphate (DHAP) to sn-glycerol 3-phosphate (G3P), the key precursor for phospholipid synthesis. The sequence is that of Glycerol-3-phosphate dehydrogenase [NAD(P)+] from Psychrobacter cryohalolentis (strain ATCC BAA-1226 / DSM 17306 / VKM B-2378 / K5).